Reading from the N-terminus, the 301-residue chain is Aquaporin NIP2-3 (301 aa).

The next 2 helical transmembrane spans lie at 57–77 (VISE…AASI) and 91–111 (SVAG…ISGA). The short motif at 114–116 (NPA) is the NPA 1 element. 3 helical membrane-spanning segments follow: residues 132-154 (VPFY…KAVL), 172-192 (ALAI…AVAT), and 200-220 (LAGL…GPVS). Positions 225–227 (NPA) match the NPA 2 motif. A helical transmembrane segment spans residues 238 to 258 (VFTGLWIYFLGPVVGTLSGAW).

The protein belongs to the MIP/aquaporin (TC 1.A.8) family. NIP (TC 1.A.8.12) subfamily.

The protein resides in the membrane. Functionally, aquaporins facilitate the transport of water and small neutral solutes across cell membranes. The polypeptide is Aquaporin NIP2-3 (NIP2-3) (Zea mays (Maize)).